Here is a 200-residue protein sequence, read N- to C-terminus: Lipopolysaccharide core heptose(II)-phosphate phosphatase (200 aa).

The signal sequence occupies residues 1–25 (MLAFCRSSLKSKKYFIILLALAAIA).

It belongs to the phosphoglycerate mutase family. Ais subfamily.

Its subcellular location is the periplasm. The protein operates within bacterial outer membrane biogenesis; lipopolysaccharide metabolism. In terms of biological role, catalyzes the dephosphorylation of heptose(II) of the outer membrane lipopolysaccharide core. This is Lipopolysaccharide core heptose(II)-phosphate phosphatase from Escherichia coli O157:H7.